A 219-amino-acid chain; its full sequence is Ribose-5-phosphate isomerase A (219 aa).

Substrate contacts are provided by residues 28 to 31 (TGST), 81 to 84 (DSAD), and 94 to 97 (KGGG). The Proton acceptor role is filled by Glu103. A substrate-binding site is contributed by Lys121.

It belongs to the ribose 5-phosphate isomerase family. Homodimer.

It carries out the reaction aldehydo-D-ribose 5-phosphate = D-ribulose 5-phosphate. It functions in the pathway carbohydrate degradation; pentose phosphate pathway; D-ribose 5-phosphate from D-ribulose 5-phosphate (non-oxidative stage): step 1/1. Its function is as follows. Catalyzes the reversible conversion of ribose-5-phosphate to ribulose 5-phosphate. This chain is Ribose-5-phosphate isomerase A, found in Buchnera aphidicola subsp. Schizaphis graminum (strain Sg).